We begin with the raw amino-acid sequence, 1164 residues long: DNA-directed RNA polymerase 132 kDa polypeptide (1164 aa).

Belongs to the RNA polymerase beta chain family. As to quaternary structure, the DNA-dependent RNA polymerase used for intermediate and late genes expression consists of eight subunits (147) kDa, (133) kDa, (35) kDa, (30) kDa, (22) kDa, (19) kDa, (18) kDa and (7) kDa totalling more than 500 kDa in mass. The same holoenzyme, with the addition of the transcription-specificity factor RAP94, is used for early gene expression.

It localises to the virion. The enzyme catalyses RNA(n) + a ribonucleoside 5'-triphosphate = RNA(n+1) + diphosphate. Part of the DNA-dependent RNA polymerase which catalyzes the transcription of viral DNA into RNA using the four ribonucleoside triphosphates as substrates. Responsible for the transcription of early, intermediate and late genes. DNA-dependent RNA polymerase associates with the early transcription factor (ETF), itself composed of D6 and A7, thereby allowing the early genes transcription. Late transcription, and probably also intermediate transcription, require newly synthesized RNA polymerase. This Oryctolagus cuniculus (Rabbit) protein is DNA-directed RNA polymerase 132 kDa polypeptide (RPO132).